A 440-amino-acid polypeptide reads, in one-letter code: 23S rRNA (uracil(1939)-C(5))-methyltransferase RlmD (440 aa).

A TRAM domain is found at 8–69; that stretch reads PQKINKLQRE…RQFGLATTKK (62 aa). Positions 82, 88, 91, and 169 each coordinate [4Fe-4S] cluster. Positions 272, 301, 306, 322, 349, and 370 each coordinate S-adenosyl-L-methionine. The Nucleophile role is filled by cysteine 396.

It belongs to the class I-like SAM-binding methyltransferase superfamily. RNA M5U methyltransferase family. RlmD subfamily.

The enzyme catalyses uridine(1939) in 23S rRNA + S-adenosyl-L-methionine = 5-methyluridine(1939) in 23S rRNA + S-adenosyl-L-homocysteine + H(+). In terms of biological role, catalyzes the formation of 5-methyl-uridine at position 1939 (m5U1939) in 23S rRNA. The polypeptide is 23S rRNA (uracil(1939)-C(5))-methyltransferase RlmD (Mannheimia succiniciproducens (strain KCTC 0769BP / MBEL55E)).